The sequence spans 365 residues: UDP-N-acetylglucosamine--N-acetylmuramyl-(pentapeptide) pyrophosphoryl-undecaprenol N-acetylglucosamine transferase (365 aa).

UDP-N-acetyl-alpha-D-glucosamine-binding positions include T19–G21, N131, R170, S201, I255, A274–E279, and Q300.

It belongs to the glycosyltransferase 28 family. MurG subfamily.

The protein localises to the cell inner membrane. The enzyme catalyses di-trans,octa-cis-undecaprenyl diphospho-N-acetyl-alpha-D-muramoyl-L-alanyl-D-glutamyl-meso-2,6-diaminopimeloyl-D-alanyl-D-alanine + UDP-N-acetyl-alpha-D-glucosamine = di-trans,octa-cis-undecaprenyl diphospho-[N-acetyl-alpha-D-glucosaminyl-(1-&gt;4)]-N-acetyl-alpha-D-muramoyl-L-alanyl-D-glutamyl-meso-2,6-diaminopimeloyl-D-alanyl-D-alanine + UDP + H(+). Its pathway is cell wall biogenesis; peptidoglycan biosynthesis. Functionally, cell wall formation. Catalyzes the transfer of a GlcNAc subunit on undecaprenyl-pyrophosphoryl-MurNAc-pentapeptide (lipid intermediate I) to form undecaprenyl-pyrophosphoryl-MurNAc-(pentapeptide)GlcNAc (lipid intermediate II). The protein is UDP-N-acetylglucosamine--N-acetylmuramyl-(pentapeptide) pyrophosphoryl-undecaprenol N-acetylglucosamine transferase of Acinetobacter baumannii (strain ACICU).